Reading from the N-terminus, the 89-residue chain is Elongation factor 1-beta (89 aa).

Belongs to the EF-1-beta/EF-1-delta family.

In terms of biological role, promotes the exchange of GDP for GTP in EF-1-alpha/GDP, thus allowing the regeneration of EF-1-alpha/GTP that could then be used to form the ternary complex EF-1-alpha/GTP/AAtRNA. This chain is Elongation factor 1-beta, found in Methanosarcina barkeri (strain Fusaro / DSM 804).